The sequence spans 471 residues: Tryptophanase (471 aa).

N6-acetyllysine occurs at positions 5, 115, and 156. N6-(pyridoxal phosphate)lysine is present on K270. Position 450 is an N6-acetyllysine (K450).

The protein belongs to the beta-eliminating lyase family. Homotetramer. Pyridoxal 5'-phosphate is required as a cofactor.

It carries out the reaction L-tryptophan + H2O = indole + pyruvate + NH4(+). The protein operates within amino-acid degradation; L-tryptophan degradation via pyruvate pathway; indole and pyruvate from L-tryptophan: step 1/1. This Escherichia coli O6:H1 (strain CFT073 / ATCC 700928 / UPEC) protein is Tryptophanase.